An 86-amino-acid polypeptide reads, in one-letter code: Large ribosomal subunit protein bL27 (86 aa).

This sequence belongs to the bacterial ribosomal protein bL27 family.

This chain is Large ribosomal subunit protein bL27, found in Koribacter versatilis (strain Ellin345).